A 619-amino-acid polypeptide reads, in one-letter code: Low-temperature-induced 65 kDa protein (619 aa).

2 disordered regions span residues 1–383 and 408–429; these read MESQ…STYT and LGYT…ETPR. A compositionally biased stretch (basic and acidic residues) spans 9–33; that stretch reads YGHEQAEEPIRIHHPEEEEHHEKGA. The segment covering 36 to 48 has biased composition (basic residues); the sequence is VLKKVKEKAKKIK. Residues 62–73 are compositionally biased toward acidic residues; that stretch reads VEDDDDEYDEQD. Residues 175-186 are compositionally biased toward basic and acidic residues; the sequence is FSDRGESREAHQ. The segment covering 188-197 has biased composition (polar residues); it reads PLNTPVSLLS. Over residues 221–231 the composition is skewed to basic and acidic residues; the sequence is VNVETPKRLEE. Residues 245–254 are compositionally biased toward polar residues; that stretch reads GVSNYQSKVT. 2 stretches are compositionally biased toward basic and acidic residues: residues 276-309 and 323-337; these read KVTD…ESDI and AGME…DVKV. Repeat copies occupy residues 404 to 408, 442 to 446, 460 to 464, 490 to 494, and 507 to 511. Residues 404–511 form a 5 X 5 AA repeats of [IV]-[AMS]-[EST]-K-L region; it reads VASKLGYTGE…ALSEMIAEKL (108 aa). A disordered region spans residues 461–485; that stretch reads MTKLPLSGGGSGVKETQQGEEKGVT. Serine 536 carries the phosphoserine modification. Basic and acidic residues predominate over residues 537–555; it reads DQIAEGKGHGEAVAEEGKG. The tract at residues 537-619 is disordered; the sequence is DQIAEGKGHG…GGKGVQDSGN (83 aa). A compositionally biased stretch (polar residues) spans 583–593; that stretch reads ESPQSLGTTVG. Residues 603-613 show a composition bias toward gly residues; sequence SELGGSGGGKG.

Belongs to the LTI78/LTI65 family.

The protein is Low-temperature-induced 65 kDa protein (LTI65) of Arabidopsis thaliana (Mouse-ear cress).